The chain runs to 378 residues: Quinolinate synthase (378 aa).

Iminosuccinate-binding residues include histidine 59 and serine 80. Cysteine 125 is a [4Fe-4S] cluster binding site. Residues 151 to 153 and serine 168 contribute to the iminosuccinate site; that span reads YAN. Cysteine 212 contacts [4Fe-4S] cluster. Residues 238–240 and threonine 255 each bind iminosuccinate; that span reads HPE. [4Fe-4S] cluster is bound at residue cysteine 309.

This sequence belongs to the quinolinate synthase family. Type 1 subfamily. It depends on [4Fe-4S] cluster as a cofactor.

It is found in the cytoplasm. It catalyses the reaction iminosuccinate + dihydroxyacetone phosphate = quinolinate + phosphate + 2 H2O + H(+). Its pathway is cofactor biosynthesis; NAD(+) biosynthesis; quinolinate from iminoaspartate: step 1/1. Its function is as follows. Catalyzes the condensation of iminoaspartate with dihydroxyacetone phosphate to form quinolinate. The polypeptide is Quinolinate synthase (Burkholderia lata (strain ATCC 17760 / DSM 23089 / LMG 22485 / NCIMB 9086 / R18194 / 383)).